The following is a 339-amino-acid chain: Retinol dehydrogenase 10-A (339 aa).

Residues 3-23 (IFVEFFLVMLKVCWAIVMAGF) form a helical; Signal-anchor membrane-spanning segment. 40–64 (VITGAGGGLGRLFAKEFARRRATLV) contributes to the NADP(+) binding site. Residue serine 195 participates in substrate binding. Tyrosine 208 acts as the Proton acceptor in catalysis.

It belongs to the short-chain dehydrogenases/reductases (SDR) family.

The protein localises to the microsome membrane. It localises to the endoplasmic reticulum membrane. The catalysed reaction is all-trans-retinol + NADP(+) = all-trans-retinal + NADPH + H(+). The protein operates within cofactor metabolism; retinol metabolism. Retinol dehydrogenase with a clear preference for NADP. Converts all-trans-retinol to all-trans-retinal. Has no detectable activity towards 11-cis-retinol, 9-cis-retinol and 13-cis-retinol. The protein is Retinol dehydrogenase 10-A (rdh10a) of Danio rerio (Zebrafish).